Here is a 199-residue protein sequence, read N- to C-terminus: Holliday junction branch migration complex subunit RuvA (199 aa).

The interval 1–64 is domain I; the sequence is MIAFLKGAVF…ENEFKLFGFL (64 aa). Positions 65 to 143 are domain II; the sequence is DQDELRLFKT…ELKLVEVEKE (79 aa). The flexible linker stretch occupies residues 144–148; it reads QRPLL. Residues 148 to 199 are domain III; it reads LDELMEALEILGYSRSEVLPAIMDLNRNKQLGNIVEENIKLVLKAKAQEMRR.

The protein belongs to the RuvA family. As to quaternary structure, homotetramer. Forms an RuvA(8)-RuvB(12)-Holliday junction (HJ) complex. HJ DNA is sandwiched between 2 RuvA tetramers; dsDNA enters through RuvA and exits via RuvB. An RuvB hexamer assembles on each DNA strand where it exits the tetramer. Each RuvB hexamer is contacted by two RuvA subunits (via domain III) on 2 adjacent RuvB subunits; this complex drives branch migration. In the full resolvosome a probable DNA-RuvA(4)-RuvB(12)-RuvC(2) complex forms which resolves the HJ.

The protein resides in the cytoplasm. Its function is as follows. The RuvA-RuvB-RuvC complex processes Holliday junction (HJ) DNA during genetic recombination and DNA repair, while the RuvA-RuvB complex plays an important role in the rescue of blocked DNA replication forks via replication fork reversal (RFR). RuvA specifically binds to HJ cruciform DNA, conferring on it an open structure. The RuvB hexamer acts as an ATP-dependent pump, pulling dsDNA into and through the RuvAB complex. HJ branch migration allows RuvC to scan DNA until it finds its consensus sequence, where it cleaves and resolves the cruciform DNA. This chain is Holliday junction branch migration complex subunit RuvA, found in Syntrophomonas wolfei subsp. wolfei (strain DSM 2245B / Goettingen).